A 162-amino-acid chain; its full sequence is NADH-quinone oxidoreductase subunit I (162 aa).

2 4Fe-4S ferredoxin-type domains span residues 52–82 (LRRY…IEAG) and 93–122 (VRYD…EGPN). [4Fe-4S] cluster contacts are provided by Cys-62, Cys-65, Cys-68, Cys-72, Cys-102, Cys-105, Cys-108, and Cys-112.

The protein belongs to the complex I 23 kDa subunit family. In terms of assembly, NDH-1 is composed of 14 different subunits. Subunits NuoA, H, J, K, L, M, N constitute the membrane sector of the complex. It depends on [4Fe-4S] cluster as a cofactor.

The protein resides in the cell inner membrane. It catalyses the reaction a quinone + NADH + 5 H(+)(in) = a quinol + NAD(+) + 4 H(+)(out). In terms of biological role, NDH-1 shuttles electrons from NADH, via FMN and iron-sulfur (Fe-S) centers, to quinones in the respiratory chain. The immediate electron acceptor for the enzyme in this species is believed to be ubiquinone. Couples the redox reaction to proton translocation (for every two electrons transferred, four hydrogen ions are translocated across the cytoplasmic membrane), and thus conserves the redox energy in a proton gradient. The chain is NADH-quinone oxidoreductase subunit I from Bradyrhizobium sp. (strain ORS 278).